The chain runs to 497 residues: 4,4'-diaponeurosporene oxygenase (497 aa).

7–19 (VIGGGLGGISAAI) serves as a coordination point for FAD.

It belongs to the carotenoid/retinoid oxidoreductase family. CrtP subfamily. The cofactor is FAD.

It catalyses the reaction all-trans-4,4'-diaponeurosporene + 2 AH2 + 2 O2 = 4,4'-diaponeurosporenal + 2 A + 3 H2O. It functions in the pathway carotenoid biosynthesis; staphyloxanthin biosynthesis; staphyloxanthin from farnesyl diphosphate: step 3/5. In terms of biological role, involved in the biosynthesis of the yellow-orange carotenoid staphyloxanthin, which plays a role in the virulence via its protective function against oxidative stress. Catalyzes the oxidation of the terminal methyl side group of 4,4'-diaponeurosporene to form 4,4'-diaponeurosporen-4-al. The chain is 4,4'-diaponeurosporene oxygenase from Staphylococcus aureus (strain bovine RF122 / ET3-1).